A 425-amino-acid chain; its full sequence is Glutamate-1-semialdehyde 2,1-aminomutase (425 aa).

K264 bears the N6-(pyridoxal phosphate)lysine mark.

The protein belongs to the class-III pyridoxal-phosphate-dependent aminotransferase family. HemL subfamily. In terms of assembly, homodimer. Requires pyridoxal 5'-phosphate as cofactor.

Its subcellular location is the cytoplasm. It catalyses the reaction (S)-4-amino-5-oxopentanoate = 5-aminolevulinate. It participates in porphyrin-containing compound metabolism; protoporphyrin-IX biosynthesis; 5-aminolevulinate from L-glutamyl-tRNA(Glu): step 2/2. In Campylobacter lari (strain RM2100 / D67 / ATCC BAA-1060), this protein is Glutamate-1-semialdehyde 2,1-aminomutase.